The sequence spans 91 residues: Large ribosomal subunit protein uL29 (91 aa).

Positions 67–91 (AAPLAESSAPAKTKSRARKSKKEAL) are disordered. Positions 79 to 91 (TKSRARKSKKEAL) are enriched in basic residues.

Belongs to the universal ribosomal protein uL29 family.

This is Large ribosomal subunit protein uL29 from Acidobacterium capsulatum (strain ATCC 51196 / DSM 11244 / BCRC 80197 / JCM 7670 / NBRC 15755 / NCIMB 13165 / 161).